The primary structure comprises 139 residues: Small ribosomal subunit protein uS12 (139 aa).

The tract at residues 1–21 (MPTINQLVRKGRKAVQEKSTA) is disordered. 3-methylthioaspartic acid is present on D102.

It belongs to the universal ribosomal protein uS12 family. As to quaternary structure, part of the 30S ribosomal subunit. Contacts proteins S8 and S17. May interact with IF1 in the 30S initiation complex.

Its function is as follows. With S4 and S5 plays an important role in translational accuracy. Functionally, interacts with and stabilizes bases of the 16S rRNA that are involved in tRNA selection in the A site and with the mRNA backbone. Located at the interface of the 30S and 50S subunits, it traverses the body of the 30S subunit contacting proteins on the other side and probably holding the rRNA structure together. The combined cluster of proteins S8, S12 and S17 appears to hold together the shoulder and platform of the 30S subunit. The polypeptide is Small ribosomal subunit protein uS12 (Alkaliphilus metalliredigens (strain QYMF)).